Consider the following 399-residue polypeptide: Bifunctional enzyme IspD/IspF (399 aa).

The interval 1–235 (METWALILAA…MVEQPKTTVP (235 aa)) is 2-C-methyl-D-erythritol 4-phosphate cytidylyltransferase. The tract at residues 236–399 (IVGYGYDVHK…IVIVTAIRIS (164 aa)) is 2-C-methyl-D-erythritol 2,4-cyclodiphosphate synthase. Residues D242 and H244 each coordinate a divalent metal cation. 4-CDP-2-C-methyl-D-erythritol 2-phosphate is bound by residues 242 to 244 (DVH) and 275 to 276 (HS). H283 provides a ligand contact to a divalent metal cation. 4-CDP-2-C-methyl-D-erythritol 2-phosphate contacts are provided by residues 297–299 (DIG), 302–306 (FPDSD), 373–376 (TTEE), and F380.

In the N-terminal section; belongs to the IspD/TarI cytidylyltransferase family. IspD subfamily. This sequence in the C-terminal section; belongs to the IspF family. A divalent metal cation serves as cofactor.

It catalyses the reaction 2-C-methyl-D-erythritol 4-phosphate + CTP + H(+) = 4-CDP-2-C-methyl-D-erythritol + diphosphate. It carries out the reaction 4-CDP-2-C-methyl-D-erythritol 2-phosphate = 2-C-methyl-D-erythritol 2,4-cyclic diphosphate + CMP. It functions in the pathway isoprenoid biosynthesis; isopentenyl diphosphate biosynthesis via DXP pathway; isopentenyl diphosphate from 1-deoxy-D-xylulose 5-phosphate: step 2/6. The protein operates within isoprenoid biosynthesis; isopentenyl diphosphate biosynthesis via DXP pathway; isopentenyl diphosphate from 1-deoxy-D-xylulose 5-phosphate: step 4/6. In terms of biological role, bifunctional enzyme that catalyzes the formation of 4-diphosphocytidyl-2-C-methyl-D-erythritol from CTP and 2-C-methyl-D-erythritol 4-phosphate (MEP) (IspD), and catalyzes the conversion of 4-diphosphocytidyl-2-C-methyl-D-erythritol 2-phosphate (CDP-ME2P) to 2-C-methyl-D-erythritol 2,4-cyclodiphosphate (ME-CPP) with a corresponding release of cytidine 5-monophosphate (CMP) (IspF). This Lawsonia intracellularis (strain PHE/MN1-00) protein is Bifunctional enzyme IspD/IspF.